We begin with the raw amino-acid sequence, 202 residues long: Peptide deformylase 2 (202 aa).

Fe cation-binding residues include C120 and H162. E163 is a catalytic residue. H166 lines the Fe cation pocket.

It belongs to the polypeptide deformylase family. It depends on Fe(2+) as a cofactor.

It carries out the reaction N-terminal N-formyl-L-methionyl-[peptide] + H2O = N-terminal L-methionyl-[peptide] + formate. Removes the formyl group from the N-terminal Met of newly synthesized proteins. Requires at least a dipeptide for an efficient rate of reaction. N-terminal L-methionine is a prerequisite for activity but the enzyme has broad specificity at other positions. The sequence is that of Peptide deformylase 2 from Rickettsia conorii (strain ATCC VR-613 / Malish 7).